We begin with the raw amino-acid sequence, 529 residues long: Serine/threonine-protein kinase RIO2 (529 aa).

The 177-residue stretch at 97 to 273 (VGNQIGIGKE…RDVTCVRTFF (177 aa)) folds into the Protein kinase domain. ATP is bound at residue lysine 123. Aspartate 228 (proton acceptor) is an active-site residue. Disordered regions lie at residues 331–366 (RNRQEEDLGEDEDDSDDSKSMEDIQEEPEDLEKDHE) and 411–452 (EGYK…GHVA). Acidic residues predominate over residues 337–346 (DLGEDEDDSD). The span at 411-428 (EGYKDIELPPEDFKRPAD) shows a compositional bias: basic and acidic residues. Residues 429 to 447 (SENDDENDEDEEEGEEEDA) show a composition bias toward acidic residues.

The protein belongs to the protein kinase superfamily. RIO-type Ser/Thr kinase family. The cofactor is Mg(2+). In terms of tissue distribution, expressed in pharynx (metacorpus and posterior bulbus). Expression is restricted to adult stage.

It catalyses the reaction L-seryl-[protein] + ATP = O-phospho-L-seryl-[protein] + ADP + H(+). The enzyme catalyses L-threonyl-[protein] + ATP = O-phospho-L-threonyl-[protein] + ADP + H(+). Functionally, required for larval development. The polypeptide is Serine/threonine-protein kinase RIO2 (Caenorhabditis elegans).